The following is a 116-amino-acid chain: Nucleoid-associated protein A9601_00191 (116 aa).

This sequence belongs to the YbaB/EbfC family. As to quaternary structure, homodimer.

It is found in the cytoplasm. Its subcellular location is the nucleoid. Binds to DNA and alters its conformation. May be involved in regulation of gene expression, nucleoid organization and DNA protection. This chain is Nucleoid-associated protein A9601_00191, found in Prochlorococcus marinus (strain AS9601).